The primary structure comprises 331 residues: Heat-inducible transcription repressor HrcA (331 aa).

Belongs to the HrcA family.

Its function is as follows. Negative regulator of class I heat shock genes (grpE-dnaK-dnaJ and groELS operons). Prevents heat-shock induction of these operons. The polypeptide is Heat-inducible transcription repressor HrcA (Synechococcus sp. (strain WH7803)).